Consider the following 677-residue polypeptide: Polyunsaturated fatty acid lipoxygenase ALOX8 (677 aa).

The PLAT domain maps to 2 to 125 (AKCRVRVSTG…ELVLREGAAK (124 aa)). Ca(2+) contacts are provided by Gly15, Gly17, Asp39, His40, Gly42, Glu44, Asp86, and Ala87. In terms of domain architecture, Lipoxygenase spans 126 to 677 (VSWQDHHPTL…PPLIENSVSI (552 aa)). Fe cation contacts are provided by His374, His379, His554, and Ile677.

It belongs to the lipoxygenase family. Fe cation serves as cofactor. In terms of tissue distribution, expressed in epidermis and brain. No expression found in heart, spleen, liver, skeletal muscle, kidney or testis.

The protein localises to the cytoplasm. It localises to the cytosol. The protein resides in the membrane. It carries out the reaction (9Z,12Z)-octadecadienoate + O2 = (9S)-hydroperoxy-(10E,12Z)-octadecadienoate. The enzyme catalyses (5Z,8Z,11Z,14Z)-eicosatetraenoate + O2 = (8S)-hydroperoxy-(5Z,9E,11Z,14Z)-eicosatetraenoate. The catalysed reaction is (15S)-hydroperoxy-(5Z,8Z,11Z,13E)-eicosatetraenoate + O2 = (8S,15S)-dihydroperoxy-(5Z,9E,11Z,13E)-eicosatetraenoate. It catalyses the reaction (8S)-hydroperoxy-(5Z,9E,11Z,14Z)-eicosatetraenoate + O2 = (8S,15S)-dihydroperoxy-(5Z,9E,11Z,13E)-eicosatetraenoate. It carries out the reaction 1-octadecanoyl-2-(5Z,8Z,11Z,14Z-eicosatetraenoyl)-sn-glycero-3-phosphocholine + O2 = 1-octadecanoyl-2-(15-hydroperoxy-5Z,8Z,11Z,13E-eicosatetraenoyl)-sn-glycero-3-phosphocholine. The enzyme catalyses a 1-acyl-2-(5Z,8Z,11Z,14Z-eicosatetraenoyl)-sn-glycero-3-phospho-(1D-myo-inositol) + O2 = a 1-acyl-2-(15-hydroperoxy-5Z,8Z,11Z,13E-eicosatetraenoyl)-sn-glycero-3-phospho-(1D-myo-inositol). The catalysed reaction is a 1-acyl-2-(8Z,11Z,14Z-eicosatrienoyl)-sn-glycero-3-phospho-(1D-myo-inositol) + O2 = a 1-acyl-2-(15-hydroperoxy-8Z,11Z,13E-eicosatrienoyl)-sn-glycero-3-phospho-(1D-myo-inositol). It catalyses the reaction (5Z,8Z,11Z,14Z)-eicosatetraenoate + O2 = 9-hydroperoxy-(5Z,7E,11Z,14Z)-eicosatetraenoate. It carries out the reaction (5Z,8Z,11Z,14Z)-eicosatetraenoate + O2 = 11-hydroperoxy-(5Z,8Z,12E,14Z)-eicosatetraenoate. The enzyme catalyses (8Z,11Z,14Z)-eicosatrienoate + O2 = 15-hydroperoxy-(8Z,11Z,13E)-eicosatrienoate. The protein operates within lipid metabolism; hydroperoxy eicosatetraenoic acid biosynthesis. Non-heme iron-containing dioxygenase that catalyzes the stereo-specific peroxidation of free and esterified polyunsaturated fatty acids generating a spectrum of bioactive lipid mediators. Catalyzes the peroxidation of arachidonate and linoleate into (8S)-HPETE and (9S)-HPODE respectively. In addition to generate (8S)-HPETE from free arachidonic acid (AA), may produce other HETE isomers from phospholipid-esterified polyunsaturated fatty acids and minor products derived from (8S)-HPETE itself that may include leukotriene A4 and 8,15-diHPETE. With free arachidonate as substrate, has no detectable 15S-lipoxygenase activity and only displays a 8S-lipoxygenase activity. However may have a 15S-lipoxygenase activity with (8S)-HPETE to produce (8S,15S)-diHPETE and when oxidizes directly arachidonic acid esterified to membrane-bound phospholipids to produce a phospholipid-esterified 15-HpETE. May also catalyze (15S)-HPETE peroxidation to produce 8,15-diHPETE. May play a role in keratinocyte differentiation through activation of the peroxisome proliferator activated receptor signaling pathway. The sequence is that of Polyunsaturated fatty acid lipoxygenase ALOX8 from Mus musculus (Mouse).